The primary structure comprises 460 residues: RING finger protein DG17 (460 aa).

The segment at 27-67 adopts an RING-type zinc-finger fold; it reads CPICFEFIYKKQIYQCKSGHHACKECWEKSLETKKECMTCK. TRAF-type zinc fingers lie at residues 141 to 194 and 196 to 253; these read SHLI…KKEL and THYK…SELQ. Residues 269 to 294 are a coiled coil; it reads IEKLTNQVGQSKKTHDELLKKIEDLS. An MATH domain is found at 320–448; that stretch reads GYRNKWIISN…DDKLIIEIYI (129 aa).

It belongs to the TNF receptor-associated factor family. A subfamily.

The protein localises to the cytoplasm. Functionally, probable adapter protein and signal transducer that links members of the tumor necrosis factor receptor family to different signaling pathways by association with the receptor cytoplasmic domain and kinases. The sequence is that of RING finger protein DG17 (zfaA) from Dictyostelium discoideum (Social amoeba).